The following is a 510-amino-acid chain: Putative thymidine phosphorylase (510 aa).

The protein belongs to the thymidine/pyrimidine-nucleoside phosphorylase family. Type 2 subfamily.

It catalyses the reaction thymidine + phosphate = 2-deoxy-alpha-D-ribose 1-phosphate + thymine. The chain is Putative thymidine phosphorylase from Nitrobacter hamburgensis (strain DSM 10229 / NCIMB 13809 / X14).